The primary structure comprises 561 residues: Putative transport protein YbjL (561 aa).

The next 5 membrane-spanning stretches (helical) occupy residues 8-28, 32-52, 66-86, 94-114, and 158-178; these read LLNG…LCLG, LGSI…LLGQ, FMLF…SIFF, MLAL…GKLF, and NLSL…IVGA. RCK C-terminal domains are found at residues 200 to 288 and 292 to 373; these read RGLD…SFRN and VFDR…RIGF. A run of 5 helical transmembrane segments spans residues 383–403, 406–426, 447–467, 475–495, and 540–560; these read LLAF…TFQF, FSFG…LGFL, FGLM…ISNG, MLIA…LFGA, and AIAN…WPGL.

Belongs to the AAE transporter (TC 2.A.81) family. YbjL subfamily.

The protein resides in the cell membrane. The protein is Putative transport protein YbjL of Salmonella arizonae (strain ATCC BAA-731 / CDC346-86 / RSK2980).